Here is a 194-residue protein sequence, read N- to C-terminus: Protein GrpE (194 aa).

Residues 1–24 (MEEKDKEEKVTGENLEPEDKNLEQ) are compositionally biased toward basic and acidic residues. A disordered region spans residues 1–41 (MEEKDKEEKVTGENLEPEDKNLEQEDKEEVVGPQEEQQIDE).

The protein belongs to the GrpE family. As to quaternary structure, homodimer.

The protein localises to the cytoplasm. Its function is as follows. Participates actively in the response to hyperosmotic and heat shock by preventing the aggregation of stress-denatured proteins, in association with DnaK and GrpE. It is the nucleotide exchange factor for DnaK and may function as a thermosensor. Unfolded proteins bind initially to DnaJ; upon interaction with the DnaJ-bound protein, DnaK hydrolyzes its bound ATP, resulting in the formation of a stable complex. GrpE releases ADP from DnaK; ATP binding to DnaK triggers the release of the substrate protein, thus completing the reaction cycle. Several rounds of ATP-dependent interactions between DnaJ, DnaK and GrpE are required for fully efficient folding. The polypeptide is Protein GrpE (Carboxydothermus hydrogenoformans (strain ATCC BAA-161 / DSM 6008 / Z-2901)).